Here is a 58-residue protein sequence, read N- to C-terminus: Amyloid-beta precursor protein (58 aa).

Residues 1 to 34 (ISEVKMDAEFRHDSGYEVHHQKLVFFAEDVGSNK) lie on the Extracellular side of the membrane. 4 residues coordinate Cu(2+): His12, Tyr16, His19, and His20. Zn(2+) contacts are provided by His12, Tyr16, His19, and His20. Residues 35-58 (GAIIGLMVGGVVIATVIVITLVML) traverse the membrane as a helical segment.

This sequence belongs to the APP family. Binds, via its C-terminus, to the PID domain of several cytoplasmic proteins, including APBB family members, the APBA family, MAPK8IP1, SHC1 and NUMB and DAB1. Binding to DAB1 inhibits its serine phosphorylation. Interacts (via NPXY motif) with DAB2 (via PID domain); the interaction is impaired by tyrosine phosphorylation of the NPXY motif. Also interacts with GPCR-like protein BPP, APPBP1, IB1, KNS2 (via its TPR domains), APPBP2 (via BaSS) and DDB1. In vitro, it binds MAPT via the MT-binding domains. Associates with microtubules in the presence of ATP and in a kinesin-dependent manner. Interacts, through a C-terminal domain, with GNAO1. Interacts with CPEB1, ANKS1B and AGER. Interacts with ITM2B. Interacts with ITM2C. Interacts with IDE. Can form homodimers; dimerization is enhanced in the presence of Cu(2+) ions. Can form homodimers; this is promoted by heparin binding. Interacts with SORL1 (via N-terminal ectodomain); this interaction retains APP in the trans-Golgi network and reduces processing into soluble APP-alpha and amyloid-beta peptides. Interacts with PLD3. Interacts with VDAC1. Interacts with NSG1; could regulate APP processing. Amyloid-beta protein 42 interacts with FPR2. Interacts with LRRK2. Interacts (via cytoplasmic domain) with KIF5B. Interacts (via C-terminus) with APBB2/FE65L1 (via C-terminus). Interacts (via intracellular domain) with APBB3. Post-translationally, proteolytically processed under normal cellular conditions. Cleavage either by alpha-secretase, beta-secretase or theta-secretase leads to generation and extracellular release of soluble APP peptides, S-APP-alpha and S-APP-beta, and the retention of corresponding membrane-anchored C-terminal fragments, C80, C83 and C99. Subsequent processing of C80 and C83 by gamma-secretase yields P3 peptides. This is the major secretory pathway and is non-amyloidogenic. Alternatively, presenilin/nicastrin-mediated gamma-secretase processing of C99 releases the amyloid-beta proteins, amyloid-beta protein 40 and amyloid-beta protein 42, major components of amyloid plaques, and the cytotoxic C-terminal fragments, gamma-CTF(50), gamma-CTF(57) and gamma-CTF(59). PSEN1 cleavage is more efficient with C83 than with C99 as substrate (in vitro). Amyloid-beta protein 40 and Amyloid-beta protein 42 are cleaved by ACE. Many other minor amyloid-beta peptides, amyloid-beta 1-X peptides, are found in cerebral spinal fluid (CSF) including the amyloid-beta X-15 peptides, produced from the cleavage by alpha-secretase.

The protein resides in the cell membrane. The protein localises to the membrane. It localises to the perikaryon. Its subcellular location is the cell projection. It is found in the growth cone. The protein resides in the clathrin-coated pit. The protein localises to the early endosome. It localises to the cytoplasmic vesicle. Its subcellular location is the secreted. It is found in the cell surface. The protein resides in the nucleus. The protein localises to the cytoplasm. Functions as a cell surface receptor and performs physiological functions on the surface of neurons relevant to neurite growth, neuronal adhesion and axonogenesis. Interaction between APP molecules on neighboring cells promotes synaptogenesis. Involved in cell mobility and transcription regulation through protein-protein interactions. Can promote transcription activation through binding to APBB1-KAT5 and inhibit Notch signaling through interaction with Numb. Couples to apoptosis-inducing pathways such as those mediated by G(o) and JIP. Inhibits G(o)-alpha ATPase activity. Acts as a kinesin I membrane receptor, mediating the axonal transport of beta-secretase and presenilin 1. By acting as a kinesin I membrane receptor, plays a role in axonal anterograde transport of cargo towards synapses in axons. May be involved in copper homeostasis/oxidative stress through copper ion reduction. In vitro, copper-metallated APP induces neuronal death directly or is potentiated through Cu(2+)-mediated low-density lipoprotein oxidation. Can regulate neurite outgrowth through binding to components of the extracellular matrix such as heparin and collagen I and IV. Induces a AGER-dependent pathway that involves activation of p38 MAPK, resulting in internalization of amyloid-beta peptide and mitochondrial dysfunction in cultured cortical neurons. Provides Cu(2+) ions for GPC1 which are required for release of nitric oxide (NO) and subsequent degradation of the heparan sulfate chains on GPC1. In Canis lupus familiaris (Dog), this protein is Amyloid-beta precursor protein (APP).